Reading from the N-terminus, the 424-residue chain is Serine--tRNA ligase (424 aa).

An L-serine-binding site is contributed by 231–233 (TAE). Position 262-264 (262-264 (RSE)) interacts with ATP. Glu285 is a binding site for L-serine. 349-352 (EISS) contributes to the ATP binding site. Ser385 lines the L-serine pocket.

It belongs to the class-II aminoacyl-tRNA synthetase family. Type-1 seryl-tRNA synthetase subfamily. In terms of assembly, homodimer. The tRNA molecule binds across the dimer.

It is found in the cytoplasm. The enzyme catalyses tRNA(Ser) + L-serine + ATP = L-seryl-tRNA(Ser) + AMP + diphosphate + H(+). It catalyses the reaction tRNA(Sec) + L-serine + ATP = L-seryl-tRNA(Sec) + AMP + diphosphate + H(+). Its pathway is aminoacyl-tRNA biosynthesis; selenocysteinyl-tRNA(Sec) biosynthesis; L-seryl-tRNA(Sec) from L-serine and tRNA(Sec): step 1/1. Its function is as follows. Catalyzes the attachment of serine to tRNA(Ser). Is also able to aminoacylate tRNA(Sec) with serine, to form the misacylated tRNA L-seryl-tRNA(Sec), which will be further converted into selenocysteinyl-tRNA(Sec). This chain is Serine--tRNA ligase, found in Marinobacter nauticus (strain ATCC 700491 / DSM 11845 / VT8) (Marinobacter aquaeolei).